The sequence spans 227 residues: ATP-dependent dethiobiotin synthetase BioD (227 aa).

Position 12–17 (12–17 (DAGKTH)) interacts with ATP. Thr16 serves as a coordination point for Mg(2+). Lys37 is a catalytic residue. Ser41 contacts substrate. Residues Asp54, 116-119 (EGAG), 176-177 (NQ), and 205-207 (PYS) each bind ATP. The Mg(2+) site is built by Asp54 and Glu116.

It belongs to the dethiobiotin synthetase family. Homodimer. Requires Mg(2+) as cofactor.

Its subcellular location is the cytoplasm. The enzyme catalyses (7R,8S)-7,8-diammoniononanoate + CO2 + ATP = (4R,5S)-dethiobiotin + ADP + phosphate + 3 H(+). It functions in the pathway cofactor biosynthesis; biotin biosynthesis; biotin from 7,8-diaminononanoate: step 1/2. In terms of biological role, catalyzes a mechanistically unusual reaction, the ATP-dependent insertion of CO2 between the N7 and N8 nitrogen atoms of 7,8-diaminopelargonic acid (DAPA, also called 7,8-diammoniononanoate) to form a ureido ring. This Pseudoalteromonas translucida (strain TAC 125) protein is ATP-dependent dethiobiotin synthetase BioD.